A 344-amino-acid chain; its full sequence is Arylacetonitrilase (344 aa).

One can recognise a CN hydrolase domain in the interval 5–290; it reads LRVAVTQAEP…EGIVYADLDL (286 aa). Residue Glu-45 is the Proton acceptor of the active site. Residue Lys-126 is part of the active site. Cys-167 acts as the Nucleophile in catalysis. Positions 324–344 are disordered; it reads VIPRDEEEPSRKANVVVPKQE.

The protein belongs to the carbon-nitrogen hydrolase superfamily. Nitrilase family.

It carries out the reaction a nitrile + 2 H2O = a carboxylate + NH4(+). The catalysed reaction is 4-chlorophenylacetonitrile + 2 H2O = 4-chlorophenylacetate + NH4(+). In terms of biological role, nitrilase that hydrolyzes preferentially phenylacetonitrile and (R,S)-mandelonitrile. Also acts on dinitriles like phenylenediacetonitriles (PDAs) 1,2-PDA, 1,3-PDA, and 1,4-PDA, and cyanophenyl acetonitriles (CPAs) 2-CPA and 4-CPA. This is Arylacetonitrilase from Macrophomina phaseolina (strain MS6) (Charcoal rot fungus).